Here is a 237-residue protein sequence, read N- to C-terminus: Phosphoribosylaminoimidazole-succinocarboxamide synthase (237 aa).

The protein belongs to the SAICAR synthetase family.

It catalyses the reaction 5-amino-1-(5-phospho-D-ribosyl)imidazole-4-carboxylate + L-aspartate + ATP = (2S)-2-[5-amino-1-(5-phospho-beta-D-ribosyl)imidazole-4-carboxamido]succinate + ADP + phosphate + 2 H(+). The protein operates within purine metabolism; IMP biosynthesis via de novo pathway; 5-amino-1-(5-phospho-D-ribosyl)imidazole-4-carboxamide from 5-amino-1-(5-phospho-D-ribosyl)imidazole-4-carboxylate: step 1/2. The polypeptide is Phosphoribosylaminoimidazole-succinocarboxamide synthase (Pseudomonas fluorescens (strain ATCC BAA-477 / NRRL B-23932 / Pf-5)).